We begin with the raw amino-acid sequence, 310 residues long: Aspartate carbamoyltransferase catalytic subunit 3 (310 aa).

Arg55 and Thr56 together coordinate carbamoyl phosphate. Position 85 (Lys85) interacts with L-aspartate. 3 residues coordinate carbamoyl phosphate: Arg106, His134, and Gln137. Positions 167 and 228 each coordinate L-aspartate. Carbamoyl phosphate contacts are provided by Leu266 and Pro267.

This sequence belongs to the aspartate/ornithine carbamoyltransferase superfamily. ATCase family. As to quaternary structure, heterododecamer (2C3:3R2) of six catalytic PyrB chains organized as two trimers (C3), and six regulatory PyrI chains organized as three dimers (R2).

The catalysed reaction is carbamoyl phosphate + L-aspartate = N-carbamoyl-L-aspartate + phosphate + H(+). Its pathway is pyrimidine metabolism; UMP biosynthesis via de novo pathway; (S)-dihydroorotate from bicarbonate: step 2/3. Its function is as follows. Catalyzes the condensation of carbamoyl phosphate and aspartate to form carbamoyl aspartate and inorganic phosphate, the committed step in the de novo pyrimidine nucleotide biosynthesis pathway. The protein is Aspartate carbamoyltransferase catalytic subunit 3 of Shewanella halifaxensis (strain HAW-EB4).